A 380-amino-acid chain; its full sequence is Succinyl-diaminopimelate desuccinylase (380 aa).

A Zn(2+)-binding site is contributed by His69. Residue Asp71 is part of the active site. Asp102 is a binding site for Zn(2+). Glu136 (proton acceptor) is an active-site residue. 3 residues coordinate Zn(2+): Glu137, Glu165, and His351.

The protein belongs to the peptidase M20A family. DapE subfamily. In terms of assembly, homodimer. Zn(2+) serves as cofactor. Requires Co(2+) as cofactor.

It carries out the reaction N-succinyl-(2S,6S)-2,6-diaminopimelate + H2O = (2S,6S)-2,6-diaminopimelate + succinate. It functions in the pathway amino-acid biosynthesis; L-lysine biosynthesis via DAP pathway; LL-2,6-diaminopimelate from (S)-tetrahydrodipicolinate (succinylase route): step 3/3. Catalyzes the hydrolysis of N-succinyl-L,L-diaminopimelic acid (SDAP), forming succinate and LL-2,6-diaminopimelate (DAP), an intermediate involved in the bacterial biosynthesis of lysine and meso-diaminopimelic acid, an essential component of bacterial cell walls. The sequence is that of Succinyl-diaminopimelate desuccinylase from Bordetella petrii (strain ATCC BAA-461 / DSM 12804 / CCUG 43448).